A 143-amino-acid polypeptide reads, in one-letter code: Ribonuclease VapC33 (143 aa).

Mg(2+) contacts are provided by Asp-5 and Asp-108.

It belongs to the PINc/VapC protein family. Mg(2+) is required as a cofactor.

Its function is as follows. Toxic component of a type II toxin-antitoxin (TA) system. An RNase. Its toxic effect is neutralized by coexpression with cognate antitoxin VapB33. The polypeptide is Ribonuclease VapC33 (Mycobacterium tuberculosis (strain CDC 1551 / Oshkosh)).